A 446-amino-acid chain; its full sequence is Bifunctional protein GlmU (446 aa).

Positions 1-226 (MLAVAILAAG…PDEVNGINDR (226 aa)) are pyrophosphorylase. UDP-N-acetyl-alpha-D-glucosamine contacts are provided by residues 7–10 (LAAG), Lys-21, Gln-73, and 78–79 (GT). A Mg(2+)-binding site is contributed by Asp-103. Gly-140, Glu-155, Asn-170, and Asn-224 together coordinate UDP-N-acetyl-alpha-D-glucosamine. Position 224 (Asn-224) interacts with Mg(2+). Positions 227-247 (CQLANCEALLQERLRNYWMKE) are linker. The segment at 248-446 (GVTFTDPASC…SKQLIKNGWQ (199 aa)) is N-acetyltransferase. UDP-N-acetyl-alpha-D-glucosamine contacts are provided by Arg-329 and Lys-347. His-359 (proton acceptor) is an active-site residue. Residues Tyr-362 and Asn-373 each coordinate UDP-N-acetyl-alpha-D-glucosamine. Residues Ala-376, 382-383 (NY), Ala-419, and Arg-436 contribute to the acetyl-CoA site.

This sequence in the N-terminal section; belongs to the N-acetylglucosamine-1-phosphate uridyltransferase family. In the C-terminal section; belongs to the transferase hexapeptide repeat family. In terms of assembly, homotrimer. The cofactor is Mg(2+).

The protein resides in the cytoplasm. It catalyses the reaction alpha-D-glucosamine 1-phosphate + acetyl-CoA = N-acetyl-alpha-D-glucosamine 1-phosphate + CoA + H(+). The catalysed reaction is N-acetyl-alpha-D-glucosamine 1-phosphate + UTP + H(+) = UDP-N-acetyl-alpha-D-glucosamine + diphosphate. It participates in nucleotide-sugar biosynthesis; UDP-N-acetyl-alpha-D-glucosamine biosynthesis; N-acetyl-alpha-D-glucosamine 1-phosphate from alpha-D-glucosamine 6-phosphate (route II): step 2/2. It functions in the pathway nucleotide-sugar biosynthesis; UDP-N-acetyl-alpha-D-glucosamine biosynthesis; UDP-N-acetyl-alpha-D-glucosamine from N-acetyl-alpha-D-glucosamine 1-phosphate: step 1/1. Its pathway is bacterial outer membrane biogenesis; LPS lipid A biosynthesis. Catalyzes the last two sequential reactions in the de novo biosynthetic pathway for UDP-N-acetylglucosamine (UDP-GlcNAc). The C-terminal domain catalyzes the transfer of acetyl group from acetyl coenzyme A to glucosamine-1-phosphate (GlcN-1-P) to produce N-acetylglucosamine-1-phosphate (GlcNAc-1-P), which is converted into UDP-GlcNAc by the transfer of uridine 5-monophosphate (from uridine 5-triphosphate), a reaction catalyzed by the N-terminal domain. The protein is Bifunctional protein GlmU of Prochlorococcus marinus (strain MIT 9313).